Reading from the N-terminus, the 247-residue chain is Phycocyanobilin:ferredoxin oxidoreductase (247 aa).

Belongs to the HY2 family.

It carries out the reaction (2R,3Z)-phycocyanobilin + 4 oxidized [2Fe-2S]-[ferredoxin] = biliverdin IXalpha + 4 reduced [2Fe-2S]-[ferredoxin] + 4 H(+). Its function is as follows. Catalyzes the four-electron reduction of biliverdin IX-alpha (2-electron reduction at both the A and D rings); the reaction proceeds via an isolatable 2-electron intermediate, 181,182-dihydrobiliverdin. This is Phycocyanobilin:ferredoxin oxidoreductase from Synechococcus sp. (strain CC9605).